The following is a 472-amino-acid chain: Argininosuccinate lyase (472 aa).

This sequence belongs to the lyase 1 family. Argininosuccinate lyase subfamily.

Its subcellular location is the cytoplasm. The catalysed reaction is 2-(N(omega)-L-arginino)succinate = fumarate + L-arginine. It participates in amino-acid biosynthesis; L-arginine biosynthesis; L-arginine from L-ornithine and carbamoyl phosphate: step 3/3. The sequence is that of Argininosuccinate lyase from Mycolicibacterium paratuberculosis (strain ATCC BAA-968 / K-10) (Mycobacterium paratuberculosis).